A 423-amino-acid chain; its full sequence is Histidine--tRNA ligase (423 aa).

It belongs to the class-II aminoacyl-tRNA synthetase family. In terms of assembly, homodimer.

It is found in the cytoplasm. The catalysed reaction is tRNA(His) + L-histidine + ATP = L-histidyl-tRNA(His) + AMP + diphosphate + H(+). The sequence is that of Histidine--tRNA ligase from Rhodococcus erythropolis (strain PR4 / NBRC 100887).